Consider the following 385-residue polypeptide: MILMVIELLSVFIALLACFYASYSDIKRGIIPNRLTFPVIGLGLLLNGARALMESDPWIFIYTAIFTAGIFALGYILWRMVAWAGGDVKLFTAVTSLLPFQPSLVSYSFLGTAFPVTASYPFPLTVIINSILALLPFLLVYVFFIIYTSRRHLMDEFMEPLRQYRTSMVLALVITSAVTLTFLITDFLPFQIIVLSLILVYLLTMVISRLPPRIKAVIVSVIIVYSLYKNFELTVSGVVILWVSITVIQLIRKLLTSITREALQDTMGVDELKEGMILASTLYRKGDEYYFDDSSLLDRFRTAARTGDVSALTYRGEPVVSAMAAGLREEEIETLRDLVSRGKIKDEFRIRRGMPFAPAIFIGLLVSLLIGDLAMILFRLFDIIF.

A run of 10 helical transmembrane segments spans residues 1–21, 29–49, 58–78, 80–100, 104–124, 126–146, 166–186, 187–207, 231–251, and 358–378; these read MILM…CFYA, GIIP…LNGA, WIFI…YILW, MVAW…LLPF, LVSY…PFPL, VIIN…FFII, TSMV…LITD, FLPF…TMVI, FELT…IQLI, and PAIF…MILF.

This sequence belongs to the peptidase A24 family.

It is found in the cell membrane. Its function is as follows. Peptidase that processes the N-terminus of prepilins. This Methanothermobacter thermautotrophicus (strain ATCC 29096 / DSM 1053 / JCM 10044 / NBRC 100330 / Delta H) (Methanobacterium thermoautotrophicum) protein is Prepilin peptidase EppA.